Reading from the N-terminus, the 145-residue chain is Large ribosomal subunit protein bL9 (145 aa).

The protein belongs to the bacterial ribosomal protein bL9 family.

Binds to the 23S rRNA. The protein is Large ribosomal subunit protein bL9 of Ureaplasma urealyticum serovar 10 (strain ATCC 33699 / Western).